The primary structure comprises 661 residues: Sorting nexin-4 (661 aa).

Composition is skewed to polar residues over residues 1–10 (MSDQFTSIQW) and 26–36 (HSQVQINSSIN). Disordered stretches follow at residues 1–49 (MSDQ…QEQD) and 56–75 (TVVR…IPPR). The span at 38-49 (IEEDQGQEQEQD) shows a compositional bias: acidic residues. The segment covering 56–70 (TVVRGGNDSDSNPNE) has biased composition (polar residues). A PX domain is found at 77–198 (VYIRSKVSQP…HIFLEDSVNW (122 aa)). Residues R120, S122, K146, and R165 each coordinate a 1,2-diacyl-sn-glycero-3-phospho-(1D-myo-inositol-3-phosphate). The span at 554–572 (LRSIKSQERKNEQVHKQDQ) shows a compositional bias: basic and acidic residues. The interval 554-661 (LRSIKSQERK…LVDVEGLEQW (108 aa)) is disordered. A compositionally biased stretch (polar residues) spans 624 to 640 (ASQTESHTQSEPQNDNQ). Residues 645–661 (DDGSDEGLVDVEGLEQW) show a composition bias toward acidic residues.

This sequence belongs to the sorting nexin family.

Its subcellular location is the cytoplasm. It localises to the membrane. The protein resides in the vacuole membrane. In terms of biological role, sorting nexin involved in the separation or division of vacuoles throughout the entire life cycle of the cells. Required for glucose-induced micropexophagy and ethanol-induced macropexophagy. Involved in the fusion between the pexophagosome and the vacuole. Also involved in the separation or division of vacuoles throughout the entire life cycle of the cells. The sequence is that of Sorting nexin-4 (SNX4) from Komagataella pastoris (Yeast).